A 699-amino-acid chain; its full sequence is Sarcoplasmic reticulum histidine-rich calcium-binding protein (699 aa).

Residues 1 to 28 (MGHHRPWLHASVLWAGVASLLLPPAMTQ) form the signal peptide. The disordered stretch occupies residues 50-95 (SEEASAELRHHLHSPRDHPDENKDVSTENGHHFWSHPDREKEDEDV). Positions 55–89 (AELRHHLHSPRDHPDENKDVSTENGHHFWSHPDRE) are enriched in basic and acidic residues. Position 76 is a phosphothreonine; by FAM20C (T76). 10 repeat units span residues 106-121 (HRSQDHKVGDEGVSGE), 134-154 (HRGHGSEDTEDSAEHRHHLPS), 155-177 (HRSHSHQDEDEDEVVSSEHHHHI), 180-213 (HGHRGHDGEDDEGEEEEEEEEEEEEASTEYGHQA), 214-237 (HRHRGHGSEEDEDVSDGHHHHGPS), 238-270 (HRHQGHEEDDDDDDDDDDDDDDDDVSIEYRHQA), 271-294 (HRHQGHGIEEDEDVSDGHHHRDPS), 295-318 (HRHRSHEEDDNDDDDVSTEYGHQA), 319-342 (HRHQDHRKEEVEAVSGEHHHHVPD), and 343-365 (HRHQGHRDEEEDEDVSTERWHQG). Residues 106-342 (HRSQDHKVGD…SGEHHHHVPD (237 aa)) form a 6 X approximate tandem repeats region. The tract at residues 106–365 (HRSQDHKVGD…DVSTERWHQG (260 aa)) is 4 X tandem repeats, acidic. Residues S119 and S145 each carry the phosphoserine; by FAM20C modification. The disordered stretch occupies residues 127 to 617 (HGGQARGHRG…EDTGPQDAQE (491 aa)). Composition is skewed to basic residues over residues 148 to 158 (HRHHLPSHRSH) and 173 to 183 (HHHHILRHGHR). Over residues 187–206 (GEDDEGEEEEEEEEEEEEAS) the composition is skewed to acidic residues. Basic residues predominate over residues 231 to 241 (HHHHGPSHRHQ). Positions 244 to 263 (EEDDDDDDDDDDDDDDDDVS) are enriched in acidic residues. Residues 288-298 (HHHRDPSHRHR) show a composition bias toward basic residues. Positions 302 to 311 (EDDNDDDDVS) are enriched in acidic residues. The segment covering 324-335 (HRKEEVEAVSGE) has biased composition (basic and acidic residues). S333 bears the Phosphoserine mark. Residues 336 to 347 (HHHHVPDHRHQG) are compositionally biased toward basic residues. Phosphoserine; by FAM20C is present on residues S358 and S431. Basic and acidic residues-rich tracts occupy residues 444 to 463 (SHQDEETGHGQRGSIKEMSH) and 470 to 481 (VVKDRSHLRKDD). S494 bears the Phosphoserine; by FAM20C mark. Over residues 504–515 (QGEKGTHHGSRD) the composition is skewed to basic and acidic residues. Composition is skewed to acidic residues over residues 532-551 (QEEEEEEDKEEEEEEEDEER) and 567-581 (SEEEEEEEEGLEEDE). S567 is modified (phosphoserine; by FAM20C). The interval 627 to 673 (CGYCSFCNRCTECESCHCDEENMGEHCDQCQHCQFCYLCPLVCETVC) is metal-binding.

Belongs to the HRC family.

Its subcellular location is the sarcoplasmic reticulum lumen. In terms of biological role, may play a role in the regulation of calcium sequestration or release in the SR of skeletal and cardiac muscle. The sequence is that of Sarcoplasmic reticulum histidine-rich calcium-binding protein (HRC) from Homo sapiens (Human).